The chain runs to 418 residues: AP-3 complex subunit mu-2 (418 aa).

One can recognise an MHD domain in the interval 176–417 (NNEAYFDVVE…MTKAGKFQVR (242 aa)).

The protein belongs to the adaptor complexes medium subunit family. As to quaternary structure, adaptor protein complex 3 (AP-3) is a heterotetramer composed of two large adaptins (delta-type subunit AP3D1 and beta-type subunit AP3B1 or AP3B2), a medium adaptin (mu-type subunit AP3M1 or AP3M2) and a small adaptin (sigma-type subunit APS1 or AP3S2). AP-3 associates with the BLOC-1 complex.

The protein resides in the golgi apparatus. The protein localises to the cytoplasmic vesicle membrane. Functionally, component of the adaptor complexes which link clathrin to receptors in coated vesicles. Clathrin-associated protein complexes are believed to interact with the cytoplasmic tails of membrane proteins, leading to their selection and concentration. Ap47 is a subunit of the plasma membrane adaptor. In concert with the BLOC-1 complex, AP-3 is required to target cargos into vesicles assembled at cell bodies for delivery into neurites and nerve terminals. This is AP-3 complex subunit mu-2 (Ap3m2) from Rattus norvegicus (Rat).